Here is a 100-residue protein sequence, read N- to C-terminus: UPF0235 protein Cvib_0403 (100 aa).

This sequence belongs to the UPF0235 family.

The polypeptide is UPF0235 protein Cvib_0403 (Chlorobium phaeovibrioides (strain DSM 265 / 1930) (Prosthecochloris vibrioformis (strain DSM 265))).